A 603-amino-acid chain; its full sequence is Adenine deaminase 1 (603 aa).

This sequence belongs to the metallo-dependent hydrolases superfamily. Adenine deaminase family. It depends on Mn(2+) as a cofactor.

It carries out the reaction adenine + H2O + H(+) = hypoxanthine + NH4(+). This chain is Adenine deaminase 1, found in Carboxydothermus hydrogenoformans (strain ATCC BAA-161 / DSM 6008 / Z-2901).